The sequence spans 154 residues: 6,7-dimethyl-8-ribityllumazine synthase (154 aa).

5-amino-6-(D-ribitylamino)uracil is bound by residues Phe22, 56–58 (AFE), and 80–82 (TVI). Residue 85-86 (AT) participates in (2S)-2-hydroxy-3-oxobutyl phosphate binding. His88 (proton donor) is an active-site residue. Residue Phe113 participates in 5-amino-6-(D-ribitylamino)uracil binding. Arg127 is a binding site for (2S)-2-hydroxy-3-oxobutyl phosphate.

It belongs to the DMRL synthase family. As to quaternary structure, forms an icosahedral capsid composed of 60 subunits, arranged as a dodecamer of pentamers.

It catalyses the reaction (2S)-2-hydroxy-3-oxobutyl phosphate + 5-amino-6-(D-ribitylamino)uracil = 6,7-dimethyl-8-(1-D-ribityl)lumazine + phosphate + 2 H2O + H(+). The protein operates within cofactor biosynthesis; riboflavin biosynthesis; riboflavin from 2-hydroxy-3-oxobutyl phosphate and 5-amino-6-(D-ribitylamino)uracil: step 1/2. Catalyzes the formation of 6,7-dimethyl-8-ribityllumazine by condensation of 5-amino-6-(D-ribitylamino)uracil with 3,4-dihydroxy-2-butanone 4-phosphate. This is the penultimate step in the biosynthesis of riboflavin. The polypeptide is 6,7-dimethyl-8-ribityllumazine synthase (Bacillus licheniformis (strain ATCC 14580 / DSM 13 / JCM 2505 / CCUG 7422 / NBRC 12200 / NCIMB 9375 / NCTC 10341 / NRRL NRS-1264 / Gibson 46)).